Here is a 250-residue protein sequence, read N- to C-terminus: UPF0193 protein EVG1 homolog (250 aa).

The disordered stretch occupies residues 86-110; sequence ESLRNGEPLPLPEPPRPNTNNDPDK.

Belongs to the UPF0193 (EVG1) family.

The sequence is that of UPF0193 protein EVG1 homolog from Drosophila melanogaster (Fruit fly).